The following is a 509-amino-acid chain: Citrate synthase 3, peroxisomal (509 aa).

Active-site residues include histidine 319, histidine 358, and aspartate 414. Residues 485 to 509 (SKESDKLGQVATSNASRRRLAGSSV) form a disordered region. Basic residues predominate over residues 500 to 509 (SRRRLAGSSV).

It belongs to the citrate synthase family. Widely expressed. Expressed throughout the shoot. Expressed in flower, silique, stem, cauline leaf, young leaf, mature leaf and senescent leaf.

It is found in the peroxisome. The enzyme catalyses oxaloacetate + acetyl-CoA + H2O = citrate + CoA + H(+). Its pathway is carbohydrate metabolism; tricarboxylic acid cycle; isocitrate from oxaloacetate: step 1/2. Peroxisomal citrate synthase required for the fatty acid respiration in seedlings, citrate being exported from peroxisomes into mitochondria during respiration of triacylglycerol (TAG). Indeed, complete respiration requires the transfer of carbon in the form of citrate from the peroxisome to the mitochondria. The protein is Citrate synthase 3, peroxisomal (CSY3) of Arabidopsis thaliana (Mouse-ear cress).